A 230-amino-acid chain; its full sequence is MTSDDRIKLEPSWKNALRDEFEQPYMAQLREFLRQEHAAGKEIYPPGPLIFNALNSTPLDNVKVVILGQDPYHGPNQAHGLCFSVQPGVPTPPSLVNIYKELKRDLNIDIPNHGCLQSWADQGVLLLNTTLTVERANAASHAGKGWQHFTDRIIQVVSEHQPHLVFLLWGAHAQSKQKLVDATKHLVLTSVHPSPLSAYKGFLGNGHFGRANKYLEQNGIAPIDWRLPAL.

D70 acts as the Proton acceptor in catalysis.

It belongs to the uracil-DNA glycosylase (UDG) superfamily. UNG family.

The protein resides in the cytoplasm. The enzyme catalyses Hydrolyzes single-stranded DNA or mismatched double-stranded DNA and polynucleotides, releasing free uracil.. In terms of biological role, excises uracil residues from the DNA which can arise as a result of misincorporation of dUMP residues by DNA polymerase or due to deamination of cytosine. This Pseudomonas syringae pv. syringae (strain B728a) protein is Uracil-DNA glycosylase.